Reading from the N-terminus, the 440-residue chain is Gap junction gamma-2 protein (440 aa).

Over 1 to 21 the chain is Cytoplasmic; the sequence is MTNMSWSFLTRLLEEIHNHST. Residues 22–42 form a helical membrane-spanning segment; the sequence is FVGKVWLTVLVVFRIVLTAVG. Topologically, residues 43–78 are extracellular; it reads GESIYSDEQSKFTCNTRQPGCDNVCYDAFAPLSHVR. A helical membrane pass occupies residues 79–99; it reads FWVFQIVVISTPSVMYLGYAV. At 100–223 the chain is on the cytoplasmic side; sequence HRLARASEQE…AQLVVRAAFE (124 aa). A disordered region spans residues 108–199; sequence QERRRALRRR…TPGPAGQHDG (92 aa). A compositionally biased stretch (basic residues) spans 112–124; sequence RALRRRPGPRRLP. Residues 150–173 show a composition bias toward acidic residues; sequence LEEDEDEEPGAPEGPGEDTEEERT. Residues 224–244 traverse the membrane as a helical segment; it reads VAFLVGQYLLYGFEVPPFFAC. Residues 245–264 lie on the Extracellular side of the membrane; it reads SRQPCPHVVDCFVSRPTEKT. Residues 265–285 form a helical membrane-spanning segment; sequence VFLLVMYVVSCLCLLLNLCEM. Residues 286-440 are Cytoplasmic-facing; that stretch reads AHLGLGSAQD…SRDGKATVWI (155 aa). The segment at 368–440 is disordered; that stretch reads ADRDSPPCSG…SRDGKATVWI (73 aa). Position 372 is a phosphoserine (Ser-372). Over residues 380 to 401 the composition is skewed to low complexity; sequence ATSRGPPRAGGPASGTGSATSG.

This sequence belongs to the connexin family. Gamma-type subfamily. In terms of assembly, a connexon is composed of a hexamer of connexins. Interacts with TJP1. In terms of tissue distribution, mainly expressed by oligodendrocytes in the central nervous system. Expressed in optic nerve (at protein level).

The protein localises to the cell membrane. It is found in the cell junction. Its subcellular location is the gap junction. Functionally, one gap junction consists of a cluster of closely packed pairs of transmembrane channels, the connexons, through which materials of low MW diffuse from one cell to a neighboring cell. May play a role in myelination in central and peripheral nervous systems. The chain is Gap junction gamma-2 protein (Gjc2) from Rattus norvegicus (Rat).